Reading from the N-terminus, the 537-residue chain is Inositol phosphorylceramide glucuronosyltransferase 1 (537 aa).

Residues 6 to 26 traverse the membrane as a helical segment; that stretch reads TSLWVLLLALVSIQLNGSFGS. Mn(2+)-binding residues include D124 and D126. Residues 124–126, 153–155, 180–184, and 248–255 contribute to the substrate site; these read DAD, NSG, TGGDQ, and HYTLGPLK. H248 serves as a coordination point for Mn(2+). A run of 5 helical transmembrane segments spans residues 293–313, 375–395, 406–426, 468–488, and 494–514; these read DELVVKFLFLLPLCALLFCIY, VSVVVCFTAVLLSLGISFAIV, VLVYEWTFTIFFLLFGVFLLF, MAFLAIAAVSLPYILGITALF, and MVGLAIILAAFMTYASEHLAV.

It belongs to the glycosyltransferase 8 family. Glycogenin subfamily. Mn(2+) is required as a cofactor. Expressed in seedlings, roots, leaves, stems and siliques.

The protein localises to the golgi apparatus membrane. The catalysed reaction is glucuronate acceptor + UDP-alpha-D-glucuronate = acceptor beta-D-glucuronoside + UDP + H(+). It carries out the reaction a 1D-myo-inositol-1-phospho-N-[(R)-2-hydroxy-very-long-chain fatty acyl]-(R)-4-hydroxysphingoid base + UDP-alpha-D-glucuronate = an alpha-D-glucuronosyl-(1&lt;-&gt;6)-1D-myo-inositol-1-phospho-N-[(R)-2-hydroxy-very-long-chain fatty acyl]-(R)-4-hydroxysphingoid base + UDP + H(+). It participates in sphingolipid metabolism. Functionally, mediates the transfer of glucuronic acid (GlcA) from UDP-GlcA to glycosyl inositol phosphorylceramides (GIPCs). The formation of GIPCs sphingolipids is essential for pollen function, plant growth and defense. Required for global fitness. The sequence is that of Inositol phosphorylceramide glucuronosyltransferase 1 from Arabidopsis thaliana (Mouse-ear cress).